A 192-amino-acid polypeptide reads, in one-letter code: Probable GTP-binding protein EngB (192 aa).

One can recognise an EngB-type G domain in the interval 22-192 (QIPEIVFAGR…LLAHLAQYIR (171 aa)). Residues 30-37 (GRSNVGKS), 57-61 (GKTRL), 75-78 (DLPG), 142-145 (TKDD), and 172-174 (YSS) each bind GTP. Residues serine 37 and threonine 59 each coordinate Mg(2+).

Belongs to the TRAFAC class TrmE-Era-EngA-EngB-Septin-like GTPase superfamily. EngB GTPase family. The cofactor is Mg(2+).

Necessary for normal cell division and for the maintenance of normal septation. The polypeptide is Probable GTP-binding protein EngB (Chlorobium phaeobacteroides (strain DSM 266 / SMG 266 / 2430)).